A 215-amino-acid polypeptide reads, in one-letter code: NADH-quinone oxidoreductase subunit C (215 aa).

This sequence belongs to the complex I 30 kDa subunit family. As to quaternary structure, NDH-1 is composed of 14 different subunits. Subunits NuoB, C, D, E, F, and G constitute the peripheral sector of the complex.

It is found in the cell inner membrane. The catalysed reaction is a quinone + NADH + 5 H(+)(in) = a quinol + NAD(+) + 4 H(+)(out). Functionally, NDH-1 shuttles electrons from NADH, via FMN and iron-sulfur (Fe-S) centers, to quinones in the respiratory chain. The immediate electron acceptor for the enzyme in this species is believed to be ubiquinone. Couples the redox reaction to proton translocation (for every two electrons transferred, four hydrogen ions are translocated across the cytoplasmic membrane), and thus conserves the redox energy in a proton gradient. This Dinoroseobacter shibae (strain DSM 16493 / NCIMB 14021 / DFL 12) protein is NADH-quinone oxidoreductase subunit C.